A 524-amino-acid chain; its full sequence is Probable endopeptidase p60 (524 aa).

The signal sequence occupies residues 1-27 (MNMKKATIAATAGIAVTAFAAPTIASA). The 44-residue stretch at 28 to 71 (STVVVEAGDTLWGIAQSKGTTVDALKKANNLTSDKIVPGQKLQV) folds into the LysM 1 domain. The SH3b domain maps to 78–142 (KTEKSVSATW…VNGKYLGDAV (65 aa)). Residues 150–188 (QEVKQETTKQTAPAAETKTEVKQSTPAPTAPKAAETKTA) are disordered. The segment covering 174 to 188 (TPAPTAPKAAETKTA) has biased composition (low complexity). Residues 196–239 (TTHTVKSGDTIWALSVKYGASVQDLMSWNNLSSSSIYVGQKIAV) enclose the LysM 2 domain. Residues 272–299 (NTNTTVKKEVTTQTQTNTTKAPAQAAKP) show a composition bias toward low complexity. Residues 272 to 313 (NTNTTVKKEVTTQTQTNTTKAPAQAAKPAPAPAPAPTVNTNA) form a disordered region. One can recognise a LysM 3 domain in the interval 314–357 (STYTVKSGDSLSKIANTFGTSVSKIKALNNLTSDNLQVGTVLKV). Residues 360–408 (TVPTTNTNNNSNTTAPTTNTSNNNTSSNTSTPSKNTNTNTNQGSSNSAS) are disordered. Residues 362 to 408 (PTTNTNNNSNTTAPTTNTSNNNTSSNTSTPSKNTNTNTNQGSSNSAS) show a composition bias toward low complexity. One can recognise a NlpC/P60 domain in the interval 406 to 524 (SASASALIAE…GKYLVGFGRV (119 aa)). The active-site Nucleophile is Cys436. The active-site Proton acceptor is the His486. Asn498 is an active-site residue.

The protein belongs to the peptidase C40 family.

Its function is as follows. This major extracellular protein may be involved in the invasion of non-professional phagocytic cells by Listeria. In Listeria welshimeri, this protein is Probable endopeptidase p60 (iap).